A 332-amino-acid polypeptide reads, in one-letter code: Endonuclease 8-like 2 (332 aa).

Residue P2 is the Schiff-base intermediate with DNA of the active site. E3 functions as the Proton donor in the catalytic mechanism. The Proton donor; for beta-elimination activity role is filled by K50. K50 is modified (N6-acetyllysine). Residues 59 to 121 (DEEMGPPGSS…EDDSEYLERD (63 aa)) form a disordered region. S68 bears the Phosphoserine mark. Over residues 74–84 (PQKEVQKEGAA) the composition is skewed to basic and acidic residues. Residues 94 to 104 (GQKTLDGSSRS) show a composition bias toward polar residues. K154 is subject to N6-acetyllysine. N231 provides a ligand contact to DNA. Residues 284 to 320 (QVYQKEQCPAGHQVMKEAFGPEDGLQRLTWWCPQCQP) form an FPG-type zinc finger. R310 functions as the Proton donor; for delta-elimination activity in the catalytic mechanism.

It belongs to the FPG family. Binds EP300. In terms of tissue distribution, detected in testis, skeletal muscle, heart, brain, placenta, lung, pancreas, kidney and liver.

It localises to the nucleus. It catalyses the reaction 2'-deoxyribonucleotide-(2'-deoxyribose 5'-phosphate)-2'-deoxyribonucleotide-DNA = a 3'-end 2'-deoxyribonucleotide-(2,3-dehydro-2,3-deoxyribose 5'-phosphate)-DNA + a 5'-end 5'-phospho-2'-deoxyribonucleoside-DNA + H(+). Acetylation of Lys-50 leads to loss of DNA nicking activity. Acetylation of Lys-154 has no effect. Its function is as follows. Involved in base excision repair of DNA damaged by oxidation or by mutagenic agents. Has DNA glycosylase activity towards 5-hydroxyuracil and other oxidized derivatives of cytosine with a preference for mismatched double-stranded DNA (DNA bubbles). Has low or no DNA glycosylase activity towards thymine glycol, 2-hydroxyadenine, hypoxanthine and 8-oxoguanine. Has AP (apurinic/apyrimidinic) lyase activity and introduces nicks in the DNA strand. Cleaves the DNA backbone by beta-delta elimination to generate a single-strand break at the site of the removed base with both 3'- and 5'-phosphates. This is Endonuclease 8-like 2 (NEIL2) from Homo sapiens (Human).